Consider the following 451-residue polypeptide: Bifunctional protein GlmU (451 aa).

Residues 1 to 232 form a pyrophosphorylase region; that stretch reads MTARSSLTIV…EDEVRGINTK (232 aa). UDP-N-acetyl-alpha-D-glucosamine-binding positions include 11–14, K25, Q78, and 83–84; these read LAAG and GT. D108 lines the Mg(2+) pocket. G144, E158, N173, and N230 together coordinate UDP-N-acetyl-alpha-D-glucosamine. N230 lines the Mg(2+) pocket. The tract at residues 233–253 is linker; the sequence is AQLAEAESVMQARLRKAAMEA. The N-acetyltransferase stretch occupies residues 254 to 451; it reads GVTLIAPETV…MKTRGKKPEK (198 aa). UDP-N-acetyl-alpha-D-glucosamine-binding residues include R319 and K337. The Proton acceptor role is filled by H349. The UDP-N-acetyl-alpha-D-glucosamine site is built by Y352 and N363. Residues A366, 372–373, S409, and R426 each bind acetyl-CoA; that span reads NY.

It in the N-terminal section; belongs to the N-acetylglucosamine-1-phosphate uridyltransferase family. This sequence in the C-terminal section; belongs to the transferase hexapeptide repeat family. As to quaternary structure, homotrimer. The cofactor is Mg(2+).

The protein resides in the cytoplasm. The enzyme catalyses alpha-D-glucosamine 1-phosphate + acetyl-CoA = N-acetyl-alpha-D-glucosamine 1-phosphate + CoA + H(+). The catalysed reaction is N-acetyl-alpha-D-glucosamine 1-phosphate + UTP + H(+) = UDP-N-acetyl-alpha-D-glucosamine + diphosphate. Its pathway is nucleotide-sugar biosynthesis; UDP-N-acetyl-alpha-D-glucosamine biosynthesis; N-acetyl-alpha-D-glucosamine 1-phosphate from alpha-D-glucosamine 6-phosphate (route II): step 2/2. It participates in nucleotide-sugar biosynthesis; UDP-N-acetyl-alpha-D-glucosamine biosynthesis; UDP-N-acetyl-alpha-D-glucosamine from N-acetyl-alpha-D-glucosamine 1-phosphate: step 1/1. It functions in the pathway bacterial outer membrane biogenesis; LPS lipid A biosynthesis. In terms of biological role, catalyzes the last two sequential reactions in the de novo biosynthetic pathway for UDP-N-acetylglucosamine (UDP-GlcNAc). The C-terminal domain catalyzes the transfer of acetyl group from acetyl coenzyme A to glucosamine-1-phosphate (GlcN-1-P) to produce N-acetylglucosamine-1-phosphate (GlcNAc-1-P), which is converted into UDP-GlcNAc by the transfer of uridine 5-monophosphate (from uridine 5-triphosphate), a reaction catalyzed by the N-terminal domain. This chain is Bifunctional protein GlmU, found in Bradyrhizobium diazoefficiens (strain JCM 10833 / BCRC 13528 / IAM 13628 / NBRC 14792 / USDA 110).